We begin with the raw amino-acid sequence, 296 residues long: Protoheme IX farnesyltransferase (296 aa).

The next 9 helical transmembrane spans lie at 14–34 (IIFGNLISVVGGFLLASKGVI), 36–56 (YPLFLATLFGVSLVVASGCVF), 75–95 (VLVKGLIDPKVSLIYASILGI), 99–119 (LLLYVGANPLAMWLAVIGFVI), 133–153 (VYGTLIGSLSGAAPPVIGYCA), 163–183 (LILLLIFSLWQMPHSYAIAIF), 209–229 (ITLYILAFMVATLMLTLSGYA), 234–254 (LVVAAAVSVWWLGMALRGYKA), and 265–285 (FVFSIIAITSLSVMMSVDFNV).

Belongs to the UbiA prenyltransferase family. Protoheme IX farnesyltransferase subfamily.

The protein resides in the cell inner membrane. It catalyses the reaction heme b + (2E,6E)-farnesyl diphosphate + H2O = Fe(II)-heme o + diphosphate. It participates in porphyrin-containing compound metabolism; heme O biosynthesis; heme O from protoheme: step 1/1. Converts heme B (protoheme IX) to heme O by substitution of the vinyl group on carbon 2 of heme B porphyrin ring with a hydroxyethyl farnesyl side group. The sequence is that of Protoheme IX farnesyltransferase from Yersinia enterocolitica serotype O:8 / biotype 1B (strain NCTC 13174 / 8081).